We begin with the raw amino-acid sequence, 179 residues long: Interleukin-22 (179 aa).

Positions M1–A33 are cleaved as a signal peptide. 2 disulfides stabilise this stretch: C40-C132 and C89-C178. N54, N68, and N97 each carry an N-linked (GlcNAc...) asparagine glycan.

Belongs to the IL-10 family.

The protein localises to the secreted. Its function is as follows. Cytokine that plays a critical role in modulating tissue responses during inflammation. Plays an essential role in the regeneration of epithelial cells to maintain barrier function after injury and for the prevention of further tissue damage. Unlike most of the cytokines, has no effect on immune cells. Signals through a heterodimeric receptor composed of two subunits, the specific receptor IL22RA1 which is present on non-immune cells in many organs and the shared subunit IL10RB. Ligation of IL22RA1 with IL22 induces activation of the tyrosine kinases JAK1 and TYK2, which in turn activates STAT3. In turn, promotes cell survival and proliferation through STAT3, ERK1/2 and PI3K/AKT pathways. Promotes phosphorylation of GSK3B at 'Ser-9' and CTTN. Promotes epithelial cell spreading. In Homo sapiens (Human), this protein is Interleukin-22 (IL22).